Reading from the N-terminus, the 476-residue chain is Small ribosomal subunit protein mS29 (476 aa).

The N-terminal 54 residues, 1 to 54 (MLPKFRSRSSIIKNTERISNILSGGKLTVCGSKLGGLYTFEKCTFNKYYSSSQY), are a transit peptide targeting the mitochondrion. The disordered stretch occupies residues 58-97 (GRPVGGNIHSSSNQQRQKNSEAPRINEIPPSTSSVEKSTT). Composition is skewed to polar residues over residues 65-74 (IHSSSNQQRQ) and 86-97 (PPSTSSVEKSTT). Residue 200–207 (GAPGSGRS) coordinates ATP.

The protein belongs to the mitochondrion-specific ribosomal protein mS29 family. Component of the mitochondrial small ribosomal subunit (mt-SSU). Mature yeast 74S mitochondrial ribosomes consist of a small (37S) and a large (54S) subunit. The 37S small subunit contains a 15S ribosomal RNA (15S mt-rRNA) and at least 32 different proteins. The 54S large subunit contains a 21S rRNA (21S mt-rRNA) and at least 45 different proteins.

The protein resides in the mitochondrion. Functionally, component of the mitochondrial ribosome (mitoribosome), a dedicated translation machinery responsible for the synthesis of mitochondrial genome-encoded proteins, including at least some of the essential transmembrane subunits of the mitochondrial respiratory chain. The mitoribosomes are attached to the mitochondrial inner membrane and translation products are cotranslationally integrated into the membrane. mS29 binds GTP and is probably an active GTPase. GTP hydrolysis may be linked to subunit association. mS29 also has an extraribosomal function, being required for maintenance of mitochondrial DNA. This Schizosaccharomyces pombe (strain 972 / ATCC 24843) (Fission yeast) protein is Small ribosomal subunit protein mS29 (rsm23).